A 94-amino-acid chain; its full sequence is Protein RnfH (94 aa).

It belongs to the UPF0125 (RnfH) family.

This chain is Protein RnfH, found in Yersinia pestis bv. Antiqua (strain Antiqua).